Consider the following 79-residue polypeptide: Small ribosomal subunit protein bS18 (79 aa).

The protein belongs to the bacterial ribosomal protein bS18 family. In terms of assembly, part of the 30S ribosomal subunit. Forms a tight heterodimer with protein bS6.

Binds as a heterodimer with protein bS6 to the central domain of the 16S rRNA, where it helps stabilize the platform of the 30S subunit. The sequence is that of Small ribosomal subunit protein bS18 from Nitrobacter winogradskyi (strain ATCC 25391 / DSM 10237 / CIP 104748 / NCIMB 11846 / Nb-255).